We begin with the raw amino-acid sequence, 296 residues long: Glycine N-acyltransferase (296 aa).

N6-acetyllysine; alternate is present on lysine 16. The residue at position 16 (lysine 16) is an N6-succinyllysine; alternate. Residue lysine 113 is modified to N6-acetyllysine. N6-acetyllysine; alternate occurs at positions 127, 141, and 142. Residues lysine 127, lysine 141, and lysine 142 each carry the N6-succinyllysine; alternate modification. Lysine 159 and lysine 167 each carry N6-acetyllysine. Position 169 is an N6-succinyllysine (lysine 169). N6-acetyllysine; alternate is present on residues lysine 183 and lysine 256. Residues lysine 183 and lysine 256 each carry the N6-succinyllysine; alternate modification. Residue lysine 267 is modified to N6-succinyllysine.

Belongs to the glycine N-acyltransferase family.

The protein localises to the mitochondrion. It carries out the reaction an acyl-CoA + glycine = an N-acylglycine + CoA + H(+). The enzyme catalyses benzoyl-CoA + glycine = N-benzoylglycine + CoA + H(+). In terms of biological role, mitochondrial acyltransferase which transfers an acyl group to the N-terminus of glycine and glutamine, although much less efficiently. Can conjugate a multitude of substrates to form a variety of N-acylglycines, thereby detoxify xenobiotics, such as benzoic acid or salicylic acid, and endogenous organic acids, such as isovaleric acid. The chain is Glycine N-acyltransferase (Glyat) from Mus musculus (Mouse).